Here is a 455-residue protein sequence, read N- to C-terminus: Argininosuccinate lyase (455 aa).

This sequence belongs to the lyase 1 family. Argininosuccinate lyase subfamily.

It is found in the cytoplasm. It carries out the reaction 2-(N(omega)-L-arginino)succinate = fumarate + L-arginine. The protein operates within amino-acid biosynthesis; L-arginine biosynthesis; L-arginine from L-ornithine and carbamoyl phosphate: step 3/3. The chain is Argininosuccinate lyase from Shewanella baltica (strain OS155 / ATCC BAA-1091).